A 714-amino-acid chain; its full sequence is Polyribonucleotide nucleotidyltransferase (714 aa).

Mg(2+)-binding residues include D489 and D495. The region spanning 556 to 615 (PKIDTIKIDVDKIKVVIGKGGETIDKIIAETGVKIDIDEEGNVSIYSSDQDAINRAKEII) is the KH domain. The S1 motif domain occupies 625–693 (GEVYHAKVVR…DKGRIDASMK (69 aa)). The interval 691–714 (SMKALVPRPPKPEKSEAKKEGKHD) is disordered. The segment covering 700–714 (PKPEKSEAKKEGKHD) has biased composition (basic and acidic residues).

It belongs to the polyribonucleotide nucleotidyltransferase family. The cofactor is Mg(2+).

The protein resides in the cytoplasm. It catalyses the reaction RNA(n+1) + phosphate = RNA(n) + a ribonucleoside 5'-diphosphate. In terms of biological role, involved in mRNA degradation. Catalyzes the phosphorolysis of single-stranded polyribonucleotides processively in the 3'- to 5'-direction. This is Polyribonucleotide nucleotidyltransferase from Streptococcus equi subsp. zooepidemicus (strain H70).